The following is a 300-amino-acid chain: NAD kinase (300 aa).

Aspartate 77 (proton acceptor) is an active-site residue. NAD(+)-binding positions include 77–78 (DG), 151–152 (ND), histidine 162, arginine 179, aspartate 181, and 192–197 (TAYSLS).

This sequence belongs to the NAD kinase family. The cofactor is a divalent metal cation.

It is found in the cytoplasm. It catalyses the reaction NAD(+) + ATP = ADP + NADP(+) + H(+). Its function is as follows. Involved in the regulation of the intracellular balance of NAD and NADP, and is a key enzyme in the biosynthesis of NADP. Catalyzes specifically the phosphorylation on 2'-hydroxyl of the adenosine moiety of NAD to yield NADP. This is NAD kinase from Cellvibrio japonicus (strain Ueda107) (Pseudomonas fluorescens subsp. cellulosa).